We begin with the raw amino-acid sequence, 354 residues long: Guanine nucleotide-binding protein G(i) subunit alpha-1 (354 aa).

A lipid anchor (N-myristoyl glycine) is attached at glycine 2. Residue cysteine 3 is the site of S-palmitoyl cysteine attachment. The G-alpha domain maps to 32-354 (REVKLLLLGA…KNNLKDCGLF (323 aa)). Residues 35–48 (KLLLLGAGESGKST) are G1 motif. GTP contacts are provided by residues 43–48 (ESGKST), 150–151 (DS), and 175–178 (LRTR). Residue serine 47 participates in Mg(2+) binding. Residues 173–181 (DVLRTRVKT) are G2 motif. Threonine 181 is a Mg(2+) binding site. The segment at 196-205 (FKMFDVGGQR) is G3 motif. GTP is bound by residues 200 to 204 (DVGGQ), 269 to 272 (NKKD), and alanine 326. The interval 265–272 (ILFLNKKD) is G4 motif. A G5 motif region spans residues 324–329 (TCATDT).

This sequence belongs to the G-alpha family. G(i/o/t/z) subfamily. Heterotrimeric G proteins are composed of 3 units; alpha, beta and gamma. The alpha chain contains the guanine nucleotide binding site. Part of a spindle orientation complex at least composed of GNAI1, GPSM2 and NUMA1. Identified in complex with the beta subunit GNB1 and the gamma subunit GNG1. Identified in complex with the beta subunit GNB1 and the gamma subunit GNG2. Component of the TAS2R14-GNAI1 complex, consisting of TAS2R14, GNAI1, GNB1 and GNG2; within the complex interacts with TAS2R14; this complex plays a role in the perception of bitterness. GTP binding causes dissociation of the heterotrimer, liberating the individual subunits so that they can interact with downstream effector proteins. Interacts (GDP-bound form) with GPSM1; this inhibits guanine nucleotide exchange and GTP binding. Interacts (GDP-bound form) with GPSM2 (via GoLoco domains); this inhibits guanine nucleotide exchange. Interacts with RGS10; this strongly enhances GTP hydrolysis. Interacts with RGS1 and RGS16. Interacts with RGS4. Interacts with RGS12. Interacts (via active GTP- or inactive GDP-bound forms) with RGS14 (via RGS and GoLoco domains). Interacts with RGS3, RGS6, RGS7, RGS8, RGS17, RGS18 and RGS20 (in vitro). Interacts (GDP-bound form) with RIC8A (via C-terminus); promoting GNAI1 folding and association with the plasma membrane. Interacts (inactive GDP-bound form) with NUCB1 (via GBA motif); the interaction leads to activation of GNAI1. Interacts (inactive GDP-bound form) with CCDC88C/DAPLE (via GBA motif); the interaction leads to activation of GNAI1. Interacts (inactive GDP-bound form) with CCDC8A/GIV (via GBA motif). Interacts with GPR15. Myristoylation at Gly-2 is required for membrane anchoring before palmitoylation. In terms of processing, palmitoylation at Cys-3 varies with membrane lipid composition.

Its subcellular location is the nucleus. It is found in the cytoplasm. The protein resides in the cell membrane. It localises to the cytoskeleton. The protein localises to the microtubule organizing center. Its subcellular location is the centrosome. It is found in the cell cortex. The protein resides in the membrane. It catalyses the reaction GTP + H2O = GDP + phosphate + H(+). In terms of biological role, guanine nucleotide-binding proteins (G proteins) function as transducers downstream of G protein-coupled receptors (GPCRs) in numerous signaling cascades. The alpha chain contains the guanine nucleotide binding site and alternates between an active, GTP-bound state and an inactive, GDP-bound state. Signaling by an activated GPCR promotes GDP release and GTP binding. The alpha subunit has a low GTPase activity that converts bound GTP to GDP, thereby terminating the signal. Both GDP release and GTP hydrolysis are modulated by numerous regulatory proteins. Signaling is mediated via effector proteins, such as adenylate cyclase. Inhibits adenylate cyclase activity of ADCY1, ADCY5 and ADCY6, leading to decreased intracellular cAMP levels. The inactive GDP-bound form prevents the association of RGS14 with centrosomes and is required for the translocation of RGS14 from the cytoplasm to the plasma membrane. Required for normal cytokinesis during mitosis. Required for cortical dynein-dynactin complex recruitment during metaphase. This Rattus norvegicus (Rat) protein is Guanine nucleotide-binding protein G(i) subunit alpha-1 (Gnai1).